The chain runs to 397 residues: Mycinamicin IV hydroxylase/epoxidase (397 aa).

Positions 63–86 (RGPSMTRDEPRTRPEMVKGGLLSM) are disordered. Positions 68 to 78 (TRDEPRTRPEM) are enriched in basic and acidic residues. Gly-81 contributes to the substrate binding site. His-91, Arg-95, Arg-288, His-344, and Cys-346 together coordinate heme.

The protein belongs to the cytochrome P450 family. Heme serves as cofactor.

Its pathway is antibiotic biosynthesis; mycinamicin biosynthesis. In terms of biological role, involved in the biosynthesis of mycinamicin, a 16-membered macrolide antibiotic. Catalyzes consecutive hydroxylation (at C14) and epoxidation (at C12-C13) reactions with mycinamicin IV as initial substrate, leading to mycinamicin II. These reactions require prior dimethylation of 6-deoxyallose to mycinose for effective conversion by the dual function MycG enzyme. In Micromonospora griseorubida, this protein is Mycinamicin IV hydroxylase/epoxidase.